Reading from the N-terminus, the 349-residue chain is KH domain-containing, RNA-binding, signal transduction-associated protein 2 (349 aa).

The 71-residue stretch at 65 to 135 folds into the KH domain; that stretch reads LIPVKQYPKF…HLSDELHVLI (71 aa). 2 disordered regions span residues 181-263 and 321-349; these read SEES…PPPA and EWAT…YGRY. The segment covering 218-231 has biased composition (low complexity); sequence RGVLTPRGTTVTRG. Residues Arg230 and Arg240 each carry the omega-N-methylarginine modification. Residues 340-349 are compositionally biased toward basic and acidic residues; it reads GYREHPYGRY.

This sequence belongs to the KHDRBS family. As to quaternary structure, self-associates to form homooligomers. Interacts with KHDRBS1/SAM68; heterooligomer formation of KHDRBS family proteins may modulate RNA substrate specificity. Interacts with RBMX, SAFB, SFRS9 and YTHDC1. Interacts with FYN and PLCG1 (via SH3 domain). Interacts (phosphorylated) with FYN, GRB2, PLCG1 and RASA1 (via SH2 domain). In terms of processing, methylated. Post-translationally, tyrosine phosphorylated by FYN, PTK6 and SRC. Tyrosine phosphorylated by SRC during mitosis. As to expression, expressed in heart, skin, brain, colon, spleen, kidney, cervix and testis. In adult cerebellum expressed predominantly in Purkinje cells and in the hippocampus is abundantly expressed in glutamatergic dentate granule cells and in specific inhibitory Schaffer collateral-associated and path-associated interneurons; expression is restricted to neuronal subpopulations largely non-overlapping with expression of KHDRBS3/SLM-2 (at protein level).

Its subcellular location is the nucleus. In terms of biological role, RNA-binding protein that plays a role in the regulation of alternative splicing and influences mRNA splice site selection and exon inclusion. Binds both poly(A) and poly(U) homopolymers. Phosphorylation by PTK6 inhibits its RNA-binding ability. Induces an increased concentration-dependent incorporation of exon in CD44 pre-mRNA by direct binding to purine-rich exonic enhancer. Can regulate alternative splicing of neurexins NRXN1-3 in the laminin G-like domain 6 containing the evolutionary conserved neurexin alternative spliced segment 4 (AS4) involved in neurexin selective targeting to postsynaptic partners. Regulates cell-type specific alternative splicing of NRXN1 at AS4 and acts synergystically with SAM68 in exon skipping. In contrast acts antagonistically with SAM68 in NRXN3 exon skipping at AS4. Its phosphorylation by FYN inhibits its ability to regulate splice site selection. May function as an adapter protein for Src kinases during mitosis. The chain is KH domain-containing, RNA-binding, signal transduction-associated protein 2 (Khdrbs2) from Mus musculus (Mouse).